The primary structure comprises 133 residues: Small ribosomal subunit protein uS8 (133 aa).

This sequence belongs to the universal ribosomal protein uS8 family. As to quaternary structure, part of the 30S ribosomal subunit. Contacts proteins S5 and S12.

Its function is as follows. One of the primary rRNA binding proteins, it binds directly to 16S rRNA central domain where it helps coordinate assembly of the platform of the 30S subunit. The sequence is that of Small ribosomal subunit protein uS8 from Synechocystis sp. (strain ATCC 27184 / PCC 6803 / Kazusa).